We begin with the raw amino-acid sequence, 626 residues long: Threonine--tRNA ligase (626 aa).

The tract at residues 1 to 145 is editing domain; that stretch reads MRMLLIHSDY…SRTIVPEKAV (145 aa). A catalytic region spans residues 207–506; that stretch reads PHVRLMLEQE…QEKGIKPMYP (300 aa). The Zn(2+) site is built by cysteine 299, histidine 351, and histidine 475.

The protein belongs to the class-II aminoacyl-tRNA synthetase family. In terms of assembly, homodimer. It depends on Zn(2+) as a cofactor.

The protein localises to the cytoplasm. The catalysed reaction is tRNA(Thr) + L-threonine + ATP = L-threonyl-tRNA(Thr) + AMP + diphosphate + H(+). Catalyzes the attachment of threonine to tRNA(Thr) in a two-step reaction: L-threonine is first activated by ATP to form Thr-AMP and then transferred to the acceptor end of tRNA(Thr). Also edits incorrectly charged L-seryl-tRNA(Thr). This Thermococcus kodakarensis (strain ATCC BAA-918 / JCM 12380 / KOD1) (Pyrococcus kodakaraensis (strain KOD1)) protein is Threonine--tRNA ligase.